Reading from the N-terminus, the 211-residue chain is Phosphoserine phosphatase (211 aa).

Aspartate 11 acts as the Nucleophile in catalysis. The Mg(2+) site is built by aspartate 11 and aspartate 13. Residue aspartate 13 is the Proton donor of the active site. Substrate contacts are provided by residues glutamate 20, arginine 56, 99-100, and lysine 144; that span reads SG. A Mg(2+)-binding site is contributed by aspartate 167. A substrate-binding site is contributed by asparagine 170.

It belongs to the HAD-like hydrolase superfamily. SerB family. Requires Mg(2+) as cofactor.

It carries out the reaction O-phospho-L-serine + H2O = L-serine + phosphate. The enzyme catalyses O-phospho-D-serine + H2O = D-serine + phosphate. It functions in the pathway amino-acid biosynthesis; L-serine biosynthesis; L-serine from 3-phospho-D-glycerate: step 3/3. This chain is Phosphoserine phosphatase, found in Methanocaldococcus jannaschii (strain ATCC 43067 / DSM 2661 / JAL-1 / JCM 10045 / NBRC 100440) (Methanococcus jannaschii).